The chain runs to 997 residues: MERDEYQLPNSHGKNTFLSRIFGLQSDEVNPSLNSQEMSNFPLPDIERGSSLLHSTNDSREDVDENDLRVPESDQGTSTEEEDEVDEEQVQAYAPQISDGLDGDHQLNSVTSKENVLETEKSNLERLVEGSTDDSVPKVGQLSSEEEEDNEFINNDGFDDDTPLFQKSKIHEFSSKKSNTIEDGKRPLFFRHILQNNRPQRDTQKLFTSSNAIHHDKDKSANNGPRNINGNQKHGTKYFGSATQPRFTGSPLNNTNRFTKLFPLRKPNLLSNISVLNNTPEDRINTLSVKERALWKWANVENLDIFLQDVYNYYLGNGFYCIILEKILNICTLLFVVFVSTYMGHCVDYSKLPTSHRVSDIIIDKCYSNSITGFTKFFLWMFYFFVILKIVQLYFDVQKLSELQNFYKYLLNISDDELQTLPWQNVIQQLMYLKDQNAMTANVVEVKAKNRIDAHDVANRIMRRENYLIALYNSDILNLSLPIPLFRTNVLTKTLEWNINLCVMGFVFNESGFIKQSILKPSQREFTREELQKRFMLAGFLNIILAPFLVTYFVLLYFFRYFNEYKTSPGSIGARQYTPIAEWKFREYNELYHIFKKRISLSTTLANKYVDQFPKEKTNLFLKFVSFICGSFVAILAFLTVFDPENFLNFEITSDRSVIFYITILGAIWSVSRNTITQEYHVFDPEETLKELYEYTHYLPKEWEGRYHKEEIKLEFCKLYNLRIVILLRELTSLMITPFVLWFSLPSSAGRIVDFFRENSEYVDGLGYVCKYAMFNMKNIDGEDTHSMDEDSLTKKIAVNGSHTLNSKRRSKFTAEDHSDKDLANNKMLQSYVYFMDDYSNSENLTGKYQLPAKKGYPNNEGDSFLNNKYSWRKQFQPGQKPELFRIGKHALGPGHNISPAIYSTRNPGKNWDNNNNGDDIKNGTNNATAKNDDNNGNNDHEYVLTESFLDSGAFPNHDVIDHNKMLNSNYNGNGILNKGGVLGLVKEYYKKSDVGR.

Over 1 to 318 (MERDEYQLPN…DVYNYYLGNG (318 aa)) the chain is Cytoplasmic. Phosphoserine; by ATG1 is present on serine 19. The segment covering 29-39 (VNPSLNSQEMS) has biased composition (polar residues). The tract at residues 29–88 (VNPSLNSQEMSNFPLPDIERGSSLLHSTNDSREDVDENDLRVPESDQGTSTEEEDEVDEE) is disordered. Over residues 79–88 (TEEEDEVDEE) the composition is skewed to acidic residues. Glycyl lysine isopeptide (Lys-Gly) (interchain with G-Cter in ubiquitin) cross-links involve residues lysine 113 and lysine 121. Serine 122 is modified (phosphoserine). 2 disordered regions span residues 128 to 159 (VEGS…DGFD) and 213 to 235 (IHHD…QKHG). Lysine 138 is covalently cross-linked (Glycyl lysine isopeptide (Lys-Gly) (interchain with G-Cter in ubiquitin)). 2 positions are modified to phosphoserine: serine 143 and serine 144. The segment covering 144–159 (SEEEEDNEFINNDGFD) has biased composition (acidic residues). A compositionally biased stretch (polar residues) spans 221-233 (ANNGPRNINGNQK). The chain crosses the membrane as a helical span at residues 319-339 (FYCIILEKILNICTLLFVVFV). The Lumenal segment spans residues 340–376 (STYMGHCVDYSKLPTSHRVSDIIIDKCYSNSITGFTK). A helical transmembrane segment spans residues 377–397 (FFLWMFYFFVILKIVQLYFDV). Over 398–538 (QKLSELQNFY…EELQKRFMLA (141 aa)) the chain is Cytoplasmic. An intramembrane segment occupies 539 to 559 (GFLNIILAPFLVTYFVLLYFF). Topologically, residues 560 to 620 (RYFNEYKTSP…DQFPKEKTNL (61 aa)) are cytoplasmic. The chain crosses the membrane as a helical span at residues 621–641 (FLKFVSFICGSFVAILAFLTV). At 642–656 (FDPENFLNFEITSDR) the chain is on the lumenal side. Serine 657 is subject to Phosphoserine; by ATG1. Residues 657 to 677 (SVIFYITILGAIWSVSRNTIT) form a helical membrane-spanning segment. Residues 678-723 (QEYHVFDPEETLKELYEYTHYLPKEWEGRYHKEEIKLEFCKLYNLR) are Cytoplasmic-facing. A Glycyl lysine isopeptide (Lys-Gly) (interchain with G-Cter in ubiquitin) cross-link involves residue lysine 701. An intramembrane segment occupies 724–744 (IVILLRELTSLMITPFVLWFS). The Cytoplasmic segment spans residues 745 to 997 (LPSSAGRIVD…EYYKKSDVGR (253 aa)). A phosphoserine mark is found at serine 787 and serine 792. The residue at position 794 (threonine 794) is a Phosphothreonine. Position 802 is a phosphoserine; by ATG1 (serine 802). Threonine 804 carries the phosphothreonine; by ATG1 modification. Serine 831 and serine 842 each carry phosphoserine; by ATG1. Phosphoserine is present on serine 864. 2 positions are modified to phosphoserine; by ATG1: serine 948 and serine 969.

This sequence belongs to the ATG9 family. In terms of assembly, homotrimer; forms a homotrimer with a central pore that forms a path between the two membrane leaflets. Interacts with ATG23 and ATG27 to form a cycling complex for trafficking to the PAS. Interacts (via N-terminus) with ATG11, required for recruitment of ATG9 to the PAS for the Cvt pathway during nutrient-rich conditions. Interacts (via N-terminus) with ATG17; required for recruitment to the PAS during autophagy and starved conditions. Interacts with ATG2 and ATG18; required for the retrieval of ATG9 from the PAS to the cytoplasmic pool. Interacts with ATG41. Interacts with the conserved oligomeric Golgi (COG) complex subunits COG3 and COG4. Interacts with TRS85. Phosphorylated by ATG1; phosphorylation is required for autophagy and cytoplasm to vacuole transport (Cvt) vesicle formation. Phosphorylation by ATG1 regulates ATG18 interaction and preautophagosome elongation. Phosphorylation at Ser-122 is required for selective autophagy by regulating anterograde trafficking and interaction with ATG23 and ATG27. Phosphorylation at Ser-122 prevents ubiquitination by the SCF(MET30) complex. Post-translationally, ubiquitinated by the SCF(MET30) complex in normal conditions, leading to its degradation by the proteasome, thereby preventing inappropriate induction of autophagy. Ubiquitination by the SCF(MET30) complex is prevented by phosphorylation at Ser-122.

The protein resides in the preautophagosomal structure membrane. The protein localises to the cytoplasmic vesicle membrane. It localises to the golgi apparatus membrane. It is found in the endoplasmic reticulum membrane. Its subcellular location is the mitochondrion membrane. The enzyme catalyses a 1,2-diacyl-sn-glycero-3-phosphocholine(in) = a 1,2-diacyl-sn-glycero-3-phosphocholine(out). It catalyses the reaction a 1,2-diacyl-sn-glycero-3-phospho-L-serine(in) = a 1,2-diacyl-sn-glycero-3-phospho-L-serine(out). It carries out the reaction a 1,2-diacyl-sn-glycero-3-phosphoethanolamine(in) = a 1,2-diacyl-sn-glycero-3-phosphoethanolamine(out). The catalysed reaction is a 1,2-diacyl-sn-glycero-3-phospho-(1D-myo-inositol-3-phosphate)(in) = a 1,2-diacyl-sn-glycero-3-phospho-(1D-myo-inositol-3-phosphate)(out). Functionally, phospholipid scramblase involved in autophagy and cytoplasm to vacuole transport (Cvt) vesicle formation. Cycles between the preautophagosomal structure/phagophore assembly site (PAS) and the cytoplasmic vesicle pool and supplies membrane for the growing autophagosome. Lipid scramblase activity plays a key role in preautophagosomal structure/phagophore assembly by distributing the phospholipids that arrive through ATG2 from the cytoplasmic to the luminal leaflet of the bilayer, thereby driving autophagosomal membrane expansion. Required for mitophagy. Also involved in endoplasmic reticulum-specific autophagic process and is essential for the survival of cells subjected to severe ER stress. Recruits vesicle-tethering proteins TRS85 and YPT1 to the autophagosome formation site. Also recruits ATG23 and ATG8 to the PAS. This is Autophagy-related protein 9 from Saccharomyces cerevisiae (strain ATCC 204508 / S288c) (Baker's yeast).